A 264-amino-acid chain; its full sequence is Phosphoinositide-3-kinase-interacting protein 1 (264 aa).

An N-terminal signal peptide occupies residues 1 to 21 (MLLAWVHTFLLSNMLLAEAYG). Residues 22 to 170 (SGGCFWDNGH…SKEKKDLGTL (149 aa)) are Extracellular-facing. Residues 24–101 (GCFWDNGHLY…EKRPCEDVSC (78 aa)) enclose the Kringle domain. Disulfide bonds link cysteine 25/cysteine 101, cysteine 46/cysteine 82, and cysteine 70/cysteine 96. Residues 94-129 (RPCEDVSCPETTSQAPPPSSAMELEEKSGAPGDKEA) form a disordered region. Residues 117–129 (LEEKSGAPGDKEA) are compositionally biased toward basic and acidic residues. The helical transmembrane segment at 171-191 (GYVLGITMMVIILAIGAGIIV) threads the bilayer. Residues 192 to 264 (GYTYKRGKDL…LTGQAGTPGA (73 aa)) are Cytoplasmic-facing.

The protein resides in the cell membrane. In terms of biological role, negative regulator of hepatic phosphatidylinositol 3-kinase (PI3K) activity. The protein is Phosphoinositide-3-kinase-interacting protein 1 (Pik3ip1) of Mus musculus (Mouse).